We begin with the raw amino-acid sequence, 35 residues long: Photosystem II reaction center protein T (35 aa).

A helical membrane pass occupies residues 3 to 23 (ALVYTFLLVSTLGIIFFAIFF).

This sequence belongs to the PsbT family. PSII is composed of 1 copy each of membrane proteins PsbA, PsbB, PsbC, PsbD, PsbE, PsbF, PsbH, PsbI, PsbJ, PsbK, PsbL, PsbM, PsbT, PsbY, PsbZ, Psb30/Ycf12, at least 3 peripheral proteins of the oxygen-evolving complex and a large number of cofactors. It forms dimeric complexes.

The protein resides in the plastid. It localises to the chloroplast thylakoid membrane. Functionally, found at the monomer-monomer interface of the photosystem II (PS II) dimer, plays a role in assembly and dimerization of PSII. PSII is a light-driven water plastoquinone oxidoreductase, using light energy to abstract electrons from H(2)O, generating a proton gradient subsequently used for ATP formation. This is Photosystem II reaction center protein T from Citrus sinensis (Sweet orange).